Reading from the N-terminus, the 71-residue chain is ATP synthase F(0) complex subunit e, mitochondrial (71 aa).

At K34 the chain carries N6-acetyllysine. S68 carries the phosphoserine modification.

This sequence belongs to the ATPase e subunit family. Component of the ATP synthase complex composed at least of ATP5F1A/subunit alpha, ATP5F1B/subunit beta, ATP5MC1/subunit c (homooctomer), MT-ATP6/subunit a, MT-ATP8/subunit 8, ATP5ME/subunit e, ATP5MF/subunit f, ATP5MG/subunit g, ATP5MK/subunit k, ATP5MJ/subunit j, ATP5F1C/subunit gamma, ATP5F1D/subunit delta, ATP5F1E/subunit epsilon, ATP5PF/subunit F6, ATP5PB/subunit b, ATP5PD/subunit d, ATP5PO/subunit OSCP. ATP synthase complex consists of a soluble F(1) head domain (subunits alpha(3) and beta(3)) - the catalytic core - and a membrane F(0) domain - the membrane proton channel (subunits c, a, 8, e, f, g, k and j). These two domains are linked by a central stalk (subunits gamma, delta, and epsilon) rotating inside the F1 region and a stationary peripheral stalk (subunits F6, b, d, and OSCP). In terms of tissue distribution, mammary gland, liver, kidney, heart, spleen, brain and lung.

It is found in the mitochondrion. It localises to the mitochondrion inner membrane. Its function is as follows. Subunit e, of the mitochondrial membrane ATP synthase complex (F(1)F(0) ATP synthase or Complex V) that produces ATP from ADP in the presence of a proton gradient across the membrane which is generated by electron transport complexes of the respiratory chain. ATP synthase complex consist of a soluble F(1) head domain - the catalytic core - and a membrane F(1) domain - the membrane proton channel. These two domains are linked by a central stalk rotating inside the F(1) region and a stationary peripheral stalk. During catalysis, ATP synthesis in the catalytic domain of F(1) is coupled via a rotary mechanism of the central stalk subunits to proton translocation. In vivo, can only synthesize ATP although its ATP hydrolase activity can be activated artificially in vitro. Part of the complex F(0) domain. This Mus musculus (Mouse) protein is ATP synthase F(0) complex subunit e, mitochondrial.